The sequence spans 152 residues: Transcriptional repressor NrdR (152 aa).

A compositionally biased stretch (polar residues) spans 1–10 (MKCPSCQHNG). The tract at residues 1–21 (MKCPSCQHNGSRVLDSRPADE) is disordered. Residues 3 to 34 (CPSCQHNGSRVLDSRPADEGKSIRRRRECEAC) fold into a zinc finger. The ATP-cone domain maps to 49-139 (LIVVKKEGVR…VYRQFKDINV (91 aa)).

The protein belongs to the NrdR family. The cofactor is Zn(2+).

Negatively regulates transcription of bacterial ribonucleotide reductase nrd genes and operons by binding to NrdR-boxes. The sequence is that of Transcriptional repressor NrdR from Bacillus velezensis (strain DSM 23117 / BGSC 10A6 / LMG 26770 / FZB42) (Bacillus amyloliquefaciens subsp. plantarum).